We begin with the raw amino-acid sequence, 338 residues long: 1-aminocyclopropane-1-carboxylate deaminase (338 aa).

Lysine 51 is modified (N6-(pyridoxal phosphate)lysine). Serine 78 serves as the catalytic Nucleophile.

This sequence belongs to the ACC deaminase/D-cysteine desulfhydrase family. As to quaternary structure, homotrimer. Requires pyridoxal 5'-phosphate as cofactor.

It carries out the reaction 1-aminocyclopropane-1-carboxylate + H2O = 2-oxobutanoate + NH4(+). Catalyzes a cyclopropane ring-opening reaction, the irreversible conversion of 1-aminocyclopropane-1-carboxylate (ACC) to ammonia and alpha-ketobutyrate. Allows growth on ACC as a nitrogen source. The chain is 1-aminocyclopropane-1-carboxylate deaminase from Burkholderia pseudomallei (strain 1710b).